A 174-amino-acid polypeptide reads, in one-letter code: SUSHI domain-containing protein E3 (174 aa).

An N-terminal signal peptide occupies residues 1 to 20 (MATEVQFACALVVLLGCGYA). Residues 35-97 (QNCTTYPSIE…WTNGPPSCVK (63 aa)) enclose the Sushi domain. Cystine bridges form between Cys-37/Cys-78 and Cys-64/Cys-95. Positions 108–127 (STSTTPVTTGTFPDPQNTTH) are enriched in low complexity. The disordered stretch occupies residues 108 to 133 (STSTTPVTTGTFPDPQNTTHPTHHTV). The helical transmembrane segment at 145 to 165 (FGYTPWAIITLVVIILLVVWI) threads the bilayer.

It is found in the host membrane. This Equine herpesvirus 2 (strain 86/87) (EHV-2) protein is SUSHI domain-containing protein E3 (E3).